A 227-amino-acid polypeptide reads, in one-letter code: Adapter protein MecA 1 (227 aa).

The protein belongs to the MecA family. Homodimer.

Its function is as follows. Enables the recognition and targeting of unfolded and aggregated proteins to the ClpC protease or to other proteins involved in proteolysis. Acts negatively in the development of competence by binding ComK and recruiting it to the ClpCP protease. When overexpressed, inhibits sporulation. Also involved in Spx degradation by ClpC. This is Adapter protein MecA 1 (mecA1) from Bacillus anthracis.